A 42-amino-acid chain; its full sequence is Delta-actinopoditoxin-Mb1a (42 aa).

Disulfide bonds link C1/C15, C8/C20, C14/C31, and C16/C42.

The protein belongs to the neurotoxin 06 (delta-actx) family. As to expression, expressed by the venom gland.

It is found in the secreted. Functionally, neurotoxin that slows the inactivation of vertebrate tetrodotoxin-sensitive voltage-gated sodium channels (Nav) and most likely insect sodium channels presumably by binding to site 3 of the channel. Effects are an increase in resting tension, a muscle fasciculation and a decrease in indirect twitch tension. It fails to affect tetrodotoxin-resistant sodium currents. In vivo, is lethal to both vertebrates and insects. The sequence is that of Delta-actinopoditoxin-Mb1a from Missulena bradleyi (Eastern mouse spider).